A 544-amino-acid chain; its full sequence is Chaperonin GroEL (544 aa).

Residues 29–32 (TLGP), 86–90 (DGTTT), Gly413, 476–478 (NAA), and Asp492 each bind ATP.

It belongs to the chaperonin (HSP60) family. Forms a cylinder of 14 subunits composed of two heptameric rings stacked back-to-back. Interacts with the co-chaperonin GroES.

It is found in the cytoplasm. The enzyme catalyses ATP + H2O + a folded polypeptide = ADP + phosphate + an unfolded polypeptide.. Together with its co-chaperonin GroES, plays an essential role in assisting protein folding. The GroEL-GroES system forms a nano-cage that allows encapsulation of the non-native substrate proteins and provides a physical environment optimized to promote and accelerate protein folding. The protein is Chaperonin GroEL of Halalkalibacterium halodurans (strain ATCC BAA-125 / DSM 18197 / FERM 7344 / JCM 9153 / C-125) (Bacillus halodurans).